Here is a 230-residue protein sequence, read N- to C-terminus: Probable methylthioribulose-1-phosphate dehydratase (230 aa).

Cys-87 contributes to the substrate binding site. Zn(2+) is bound by residues His-105 and His-107. The active-site Proton donor/acceptor is Glu-129. His-185 contacts Zn(2+).

The protein belongs to the aldolase class II family. MtnB subfamily. The cofactor is Zn(2+).

Its subcellular location is the cytoplasm. It catalyses the reaction 5-(methylsulfanyl)-D-ribulose 1-phosphate = 5-methylsulfanyl-2,3-dioxopentyl phosphate + H2O. It functions in the pathway amino-acid biosynthesis; L-methionine biosynthesis via salvage pathway; L-methionine from S-methyl-5-thio-alpha-D-ribose 1-phosphate: step 2/6. Its function is as follows. Catalyzes the dehydration of methylthioribulose-1-phosphate (MTRu-1-P) into 2,3-diketo-5-methylthiopentyl-1-phosphate (DK-MTP-1-P). In Drosophila pseudoobscura pseudoobscura (Fruit fly), this protein is Probable methylthioribulose-1-phosphate dehydratase.